Reading from the N-terminus, the 820-residue chain is Phenylalanine--tRNA ligase beta subunit (820 aa).

In terms of domain architecture, tRNA-binding spans P39 to R150. One can recognise a B5 domain in the interval E435–E510. D488, D494, E497, and E498 together coordinate Mg(2+). Residues S727–R818 enclose the FDX-ACB domain.

Belongs to the phenylalanyl-tRNA synthetase beta subunit family. Type 1 subfamily. As to quaternary structure, tetramer of two alpha and two beta subunits. Mg(2+) serves as cofactor.

The protein localises to the cytoplasm. The catalysed reaction is tRNA(Phe) + L-phenylalanine + ATP = L-phenylalanyl-tRNA(Phe) + AMP + diphosphate + H(+). The protein is Phenylalanine--tRNA ligase beta subunit (pheT) of Deinococcus radiodurans (strain ATCC 13939 / DSM 20539 / JCM 16871 / CCUG 27074 / LMG 4051 / NBRC 15346 / NCIMB 9279 / VKM B-1422 / R1).